Reading from the N-terminus, the 193-residue chain is dTTP/UTP pyrophosphatase (193 aa).

Asp77 functions as the Proton acceptor in the catalytic mechanism.

This sequence belongs to the Maf family. YhdE subfamily. A divalent metal cation is required as a cofactor.

It localises to the cytoplasm. The catalysed reaction is dTTP + H2O = dTMP + diphosphate + H(+). It catalyses the reaction UTP + H2O = UMP + diphosphate + H(+). Functionally, nucleoside triphosphate pyrophosphatase that hydrolyzes dTTP and UTP. May have a dual role in cell division arrest and in preventing the incorporation of modified nucleotides into cellular nucleic acids. This is dTTP/UTP pyrophosphatase from Bacteroides fragilis (strain ATCC 25285 / DSM 2151 / CCUG 4856 / JCM 11019 / LMG 10263 / NCTC 9343 / Onslow / VPI 2553 / EN-2).